A 376-amino-acid chain; its full sequence is Cytoplasmic tRNA 2-thiolation protein 2 (376 aa).

The protein belongs to the CTU2/NCS2 family.

It is found in the cytoplasm. It participates in tRNA modification; 5-methoxycarbonylmethyl-2-thiouridine-tRNA biosynthesis. Its function is as follows. Plays a central role in 2-thiolation of mcm(5)S(2)U at tRNA wobble positions of tRNA(Lys), tRNA(Glu) and tRNA(Gln). May act by forming a heterodimer with NCS6 that ligates sulfur from thiocarboxylated URM1 onto the uridine of tRNAs at wobble position. Prior mcm(5) tRNA modification by the elongator complex is required for 2-thiolation. May also be involved in protein urmylation. The chain is Cytoplasmic tRNA 2-thiolation protein 2 from Coccidioides immitis (strain RS) (Valley fever fungus).